Consider the following 146-residue polypeptide: Deoxyuridine 5'-triphosphate nucleotidohydrolase (146 aa).

Substrate contacts are provided by residues 65–67 (RSG), Asn-78, 82–84 (LID), and Met-92.

It belongs to the dUTPase family. Mg(2+) serves as cofactor.

It carries out the reaction dUTP + H2O = dUMP + diphosphate + H(+). Its pathway is pyrimidine metabolism; dUMP biosynthesis; dUMP from dCTP (dUTP route): step 2/2. Its function is as follows. This enzyme is involved in nucleotide metabolism: it produces dUMP, the immediate precursor of thymidine nucleotides and it decreases the intracellular concentration of dUTP so that uracil cannot be incorporated into DNA. The polypeptide is Deoxyuridine 5'-triphosphate nucleotidohydrolase (Thiobacillus denitrificans (strain ATCC 25259 / T1)).